A 579-amino-acid chain; its full sequence is Nif-specific regulatory protein (579 aa).

In terms of domain architecture, GAF spans 40 to 187 (DPVAEVPQIF…MVASLLEQAL (148 aa)). The Sigma-54 factor interaction domain occupies 226 to 454 (IVGSSPAIAE…LENCVNRAAA (229 aa)). ATP-binding positions include 254-261 (GESGTGKE) and 317-326 (ADGGTLFLDE). The interval 464 to 536 (EELACRQGAC…PLRTKTAQLS (73 aa)) is inter-domain linker. 2 residues coordinate a divalent metal cation: Cys468 and Cys473. A disordered region spans residues 502 to 529 (RVSAPPPEPAPAPEPAPEAPPREEVPLR). Tandem repeats lie at residues 505–506 (AP), 507–508 (PP), 509–510 (EP), 511–512 (AP), 513–514 (AP), 515–516 (EP), and 517–518 (AP). The tract at residues 505 to 518 (APPPEPAPAPEPAP) is 7 X 2 AA tandem repeats of X-P. Positions 505–520 (APPPEPAPAPEPAPEA) are enriched in pro residues. Positions 537-579 (REELLRALESAGWVQAKAARLLGMTPRQIAYALQKFEIELRKI) are C-terminal DNA-binding domain. A DNA-binding region (H-T-H motif) is located at residues 551 to 570 (QAKAARLLGMTPRQIAYALQ).

Interacts with sigma-54.

Its function is as follows. Required for activation of most nif operons, which are directly involved in nitrogen fixation. In Rhodobacter capsulatus (Rhodopseudomonas capsulata), this protein is Nif-specific regulatory protein (nifA1).